We begin with the raw amino-acid sequence, 611 residues long: Protein halfway (611 aa).

A signal peptide spans 1–22; that stretch reads MLAYTHGTWLLLLLLLVAGACA. Disordered stretches follow at residues 31 to 64, 90 to 132, and 154 to 185; these read DPAA…LKED, SLAE…AAPE, and GRAE…CQCR. Basic residues predominate over residues 43–59; it reads AHAHPQARHHHHAHPHA. The segment covering 90–101 has biased composition (polar residues); that stretch reads SLAETQSMSDPG. Residues 102 to 123 are compositionally biased toward low complexity; the sequence is SVTDTTSTSTSHSTSTTSTTSP. Residues 159-183 show a composition bias toward polar residues; the sequence is SEGQGSTVAQSEAQNRGGQGNSQCQ. Residues N221, N246, N264, and N269 are each glycosylated (N-linked (GlcNAc...) asparagine). LRR repeat units lie at residues 236–257, 259–280, 283–304, and 313–334; these read SLQS…FPRL, ALKC…AVKD, HLEF…NQNK, and NMRM…NFLN. Residues 361 to 416 enclose the LRRNT domain; that stretch reads ENRKRCVTNCPVIPNYGSCNCTLENIMIIQDNQSKPQCHVDCSNLGLVELPQRLPD. 3 LRR repeats span residues 417–438, 443–464, and 468–489; these read NTFM…FHTN, NINR…EGTK, and TFQR…FLNN. The LRRCT domain occupies 505 to 554; the sequence is NKLQCDCNSAKTLQNWLKERSSDIPDYMEIRCRNMPQRVIELQEAKLCQS.

Functionally, has a role in the ecdysone induced cascade; probably indirect control of 'late' ecdysone genes. The protein is Protein halfway of Drosophila melanogaster (Fruit fly).